The primary structure comprises 371 residues: Jasmonate-induced oxygenase 2 (371 aa).

The Fe2OG dioxygenase domain maps to 219–320 (NIGACLRVNY…RVSLAFFYNP (102 aa)). A jasmonate-binding site is contributed by Arg-225. Residues Asn-227 and Tyr-229 each contribute to the 2-oxoglutarate site. Residues His-244, Asp-246, and His-301 each contribute to the Fe cation site. Residues Arg-311 and Ser-313 each contribute to the 2-oxoglutarate site. Jasmonate contacts are provided by Arg-350 and Arg-354.

It belongs to the iron/ascorbate-dependent oxidoreductase family. Requires L-ascorbate as cofactor. Fe(2+) is required as a cofactor.

The enzyme catalyses jasmonate + 2-oxoglutarate + O2 = (1R,2R)-12-hydroxyjasmonate + succinate + CO2. Its function is as follows. 2-oxoglutarate-dependent dioxygenase involved in the oxidation of jasmonate (JA), a stress-induced phytohormone synthesized in response to attack by pathogens and herbivores, which triggers the activation of defense responses via the JA-mediated signaling pathway. Converts JA to 12-hydroxyjasmonate (12OH-JA), an inactive form of JA. Is specific to free JA, and cannot oxidize the bioactive form jasmonoyl-L-isoleucine (JA-Ile) or other JA-amino acid conjugates. Prevents over-accumulation of JA and indirectly its bioactive form JA-Ile under stress response. Acts as a negative regulator of JA-mediated defense signaling, by contributing to 12OH-JA accumulation, which represses JA defense responses upon infection by the fungal pathogen Botrytis cinerea. Acts as a negative regulator of JA-mediated defense responses upon infestation by the herbivorous caterpillar Mamestra brassicae. May be involved in the catabolism of cytotoxic polycyclic aromatic hydrocarbons (PAHs). This is Jasmonate-induced oxygenase 2 from Arabidopsis thaliana (Mouse-ear cress).